The following is a 443-amino-acid chain: Carboxypeptidase M (443 aa).

Residues 1–17 (MDRARLWLGLLLPVVAA) form the signal peptide. One can recognise a Peptidase M14 domain in the interval 21–311 (RYHHQEGMEA…ASLIEYIKQV (291 aa)). N-linked (GlcNAc...) asparagine glycosylation occurs at Asn-38. Residues His-83 and Glu-86 each coordinate Zn(2+). Cystine bridges form between Cys-138–Cys-285, Cys-242–Cys-284, and Cys-341–Cys-410. Asn-164 is a glycosylation site (N-linked (GlcNAc...) asparagine). Position 190 (His-190) interacts with Zn(2+). The active-site Proton donor/acceptor is the Glu-281. Asn-363 carries N-linked (GlcNAc...) asparagine glycosylation. Ser-423 carries GPI-anchor amidated serine lipidation. A propeptide spans 424-443 (AATKPSLGVFFMTLLYVFFK) (removed in mature form).

The protein belongs to the peptidase M14 family. It depends on Zn(2+) as a cofactor.

It localises to the cell membrane. The catalysed reaction is Cleavage of C-terminal arginine or lysine residues from polypeptides.. Its function is as follows. Specifically removes C-terminal basic residues (Arg or Lys) from peptides and proteins. It is believed to play important roles in the control of peptide hormone and growth factor activity at the cell surface, and in the membrane-localized degradation of extracellular proteins. In Mus musculus (Mouse), this protein is Carboxypeptidase M (Cpm).